The following is a 275-amino-acid chain: Axoneme-associated protein mst101(3) (275 aa).

A run of 12 repeats spans residues 64-79 (KKKCAEAAKKEKEAAE), 80-95 (KKKCAEAAKKEKEAAE), 96-111 (KKKCAEAAKKEQEAAQ), 112-127 (KKKCAELAKKEKEAAE), 128-143 (KKKCAEAAKKEKEAAE), 144-159 (RKKCEEAAFKQKCEEA), 160-175 (AKKKKEAKKAAELQQK), 181-196 (KKEKEAEMMKKCEEAA), 197-212 (KKKAAEEAAKKKAEEV), 215-230 (KKKADEAAAKKKCAEA), 231-246 (KKKAEEAALKKMCEEA), and 249-264 (KKMCEEAALQKKCAEA). A 12 X 16 AA tandem repeats of [KRA]-K-[KEM]-[CKA]-[AEKD]-[EA]-[ALE]-[AMK]-[FKAML]-[KQA]-[EQKA]-[KQCEM]-[ECLA]-[AEQ]-[AEQ]-[EQAKV] region spans residues 64-264 (KKKCAEAAKK…AALQKKCAEA (201 aa)).

In terms of tissue distribution, testis.

It is found in the cytoplasm. Functionally, possible structural role in the sperm tail. The polypeptide is Axoneme-associated protein mst101(3) (mst101(3)) (Drosophila hydei (Fruit fly)).